Here is a 666-residue protein sequence, read N- to C-terminus: Translation factor guf1, mitochondrial (666 aa).

The transit peptide at 1 to 44 directs the protein to the mitochondrion; the sequence is MRGCLQLGRWLSAAPRCQAASLRPPTVFPSYRYNRSFSTTTIYY. A tr-type G domain is found at 68–248; it reads ERFRNFCIVA…TVVEKVPAPI (181 aa). Residues 77–84, 141–145, and 195–198 each bind GTP; these read AHVDHGKS, DTPGH, and NKVD.

The protein belongs to the TRAFAC class translation factor GTPase superfamily. Classic translation factor GTPase family. LepA subfamily.

It is found in the mitochondrion inner membrane. It carries out the reaction GTP + H2O = GDP + phosphate + H(+). Its function is as follows. Promotes mitochondrial protein synthesis. May act as a fidelity factor of the translation reaction, by catalyzing a one-codon backward translocation of tRNAs on improperly translocated ribosomes. Binds to mitochondrial ribosomes in a GTP-dependent manner. The chain is Translation factor guf1, mitochondrial (guf1) from Penicillium rubens (strain ATCC 28089 / DSM 1075 / NRRL 1951 / Wisconsin 54-1255) (Penicillium chrysogenum).